Here is a 75-residue protein sequence, read N- to C-terminus: Guanine nucleotide-binding protein G(I)/G(S)/G(O) subunit gamma-4 (75 aa).

A Cysteine methyl ester modification is found at Cys72. Cys72 carries the S-geranylgeranyl cysteine lipid modification. Positions 73 to 75 (TIL) are cleaved as a propeptide — removed in mature form.

This sequence belongs to the G protein gamma family. In terms of assembly, g proteins are composed of 3 units, alpha, beta and gamma. Interacts with beta-1 and beta-2, but not with beta-3. Interacts with KCNK1. Interacts (via C-terminus) with KCNK2/TREK-1 (via N-terminus); this interaction confers ion selectivity to Cl(-) and L-glutamate. Brain.

The protein resides in the cell membrane. Guanine nucleotide-binding proteins (G proteins) are involved as a modulator or transducer in various transmembrane signaling systems. The beta and gamma chains are required for the GTPase activity, for replacement of GDP by GTP, and for G protein-effector interaction. The protein is Guanine nucleotide-binding protein G(I)/G(S)/G(O) subunit gamma-4 (Gng4) of Mus musculus (Mouse).